Here is a 436-residue protein sequence, read N- to C-terminus: GTPase Der (436 aa).

2 consecutive EngA-type G domains span residues 4–167 (PIVA…NKES) and 176–351 (IRLS…ENHK). GTP is bound by residues 10 to 17 (GKPNVGKS), 57 to 61 (DTGGI), 119 to 122 (NKVD), 182 to 189 (GRPNVGKS), 229 to 233 (DTAGM), and 294 to 297 (NKWD). The KH-like domain maps to 352–436 (KRVQSSTLNE…PIHIIPRKRN (85 aa)).

It belongs to the TRAFAC class TrmE-Era-EngA-EngB-Septin-like GTPase superfamily. EngA (Der) GTPase family. Associates with the 50S ribosomal subunit.

Its function is as follows. GTPase that plays an essential role in the late steps of ribosome biogenesis. The protein is GTPase Der of Staphylococcus epidermidis (strain ATCC 35984 / DSM 28319 / BCRC 17069 / CCUG 31568 / BM 3577 / RP62A).